We begin with the raw amino-acid sequence, 485 residues long: Two-component response regulator ORR31 (485 aa).

The Response regulatory domain maps to R13 to A138. Residue D66 is modified to 4-aspartylphosphate. Residues L195–S204 show a composition bias toward polar residues. The tract at residues L195–Q236 is disordered. The span at P211–K222 shows a compositional bias: basic and acidic residues.

This sequence belongs to the ARR family. Type-B subfamily. In terms of processing, two-component system major event consists of a His-to-Asp phosphorelay between a sensor histidine kinase (HK) and a response regulator (RR). In plants, the His-to-Asp phosphorelay involves an additional intermediate named Histidine-containing phosphotransfer protein (HPt). This multistep phosphorelay consists of a His-Asp-His-Asp sequential transfer of a phosphate group between first a His and an Asp of the HK protein, followed by the transfer to a conserved His of the HPt protein and finally the transfer to an Asp in the receiver domain of the RR protein.

Functionally, functions as a response regulator involved in His-to-Asp phosphorelay signal transduction system. Phosphorylation of the Asp residue in the receiver domain activates the ability of the protein to promote the transcription of target genes. May directly activate some type-A response regulators in response to cytokinins. The polypeptide is Two-component response regulator ORR31 (Oryza sativa subsp. japonica (Rice)).